Here is a 353-residue protein sequence, read N- to C-terminus: Photosystem II protein D1 (353 aa).

The residue at position 2 (T2) is an N-acetylthreonine. A Phosphothreonine modification is found at T2. The next 3 membrane-spanning stretches (helical) occupy residues 29 to 46 (YVGWFGVIMIPTLLTAVS), 118 to 133 (HFFLGICCYMGREWEL), and 142 to 156 (WIAVAYSAPVAAATA). Residue H118 coordinates chlorophyll a. Y126 contacts pheophytin a. [CaMn4O5] cluster-binding residues include D170 and E189. Residues 197–218 (FHMLGVAGVFGGSLFSAMHGSL) traverse the membrane as a helical segment. H198 lines the chlorophyll a pocket. A quinone contacts are provided by residues H215 and 264 to 265 (SF). H215 contacts Fe cation. H272 contributes to the Fe cation binding site. A helical transmembrane segment spans residues 274-288 (FLAAWPVVGIWFTAL). Positions 332, 333, 342, and 344 each coordinate [CaMn4O5] cluster. Positions 345 to 353 (SVEAPSING) are excised as a propeptide.

Belongs to the reaction center PufL/M/PsbA/D family. PSII is composed of 1 copy each of membrane proteins PsbA, PsbB, PsbC, PsbD, PsbE, PsbF, PsbH, PsbI, PsbJ, PsbK, PsbL, PsbM, PsbT, PsbX, PsbY, PsbZ, Psb30/Ycf12, at least 3 peripheral proteins of the oxygen-evolving complex and a large number of cofactors. It forms dimeric complexes. Requires The D1/D2 heterodimer binds P680, chlorophylls that are the primary electron donor of PSII, and subsequent electron acceptors. It shares a non-heme iron and each subunit binds pheophytin, quinone, additional chlorophylls, carotenoids and lipids. D1 provides most of the ligands for the Mn4-Ca-O5 cluster of the oxygen-evolving complex (OEC). There is also a Cl(-1) ion associated with D1 and D2, which is required for oxygen evolution. The PSII complex binds additional chlorophylls, carotenoids and specific lipids. as cofactor. Post-translationally, tyr-161 forms a radical intermediate that is referred to as redox-active TyrZ, YZ or Y-Z. C-terminally processed by CTPA; processing is essential to allow assembly of the oxygen-evolving complex and thus photosynthetic growth.

The protein localises to the plastid. The protein resides in the chloroplast thylakoid membrane. It catalyses the reaction 2 a plastoquinone + 4 hnu + 2 H2O = 2 a plastoquinol + O2. Functionally, photosystem II (PSII) is a light-driven water:plastoquinone oxidoreductase that uses light energy to abstract electrons from H(2)O, generating O(2) and a proton gradient subsequently used for ATP formation. It consists of a core antenna complex that captures photons, and an electron transfer chain that converts photonic excitation into a charge separation. The D1/D2 (PsbA/PsbD) reaction center heterodimer binds P680, the primary electron donor of PSII as well as several subsequent electron acceptors. The polypeptide is Photosystem II protein D1 (Tupiella akineta (Green alga)).